Here is a 549-residue protein sequence, read N- to C-terminus: Rhodopsin kinase grk7a (549 aa).

Serine 33 is modified (phosphoserine). Residues 53 to 171 (FESLCEKQPI…QASPFFDKFL (119 aa)) form the RGS domain. One can recognise a Protein kinase domain in the interval 186-449 (FYEFRTLGKG…NDDPRKHEWF (264 aa)). Residues 192 to 200 (LGKGGFGEV) and lysine 215 each bind ATP. Aspartate 311 functions as the Proton acceptor in the catalytic mechanism. The region spanning 450–515 (KSINFARLEA…GAVSIAWQQE (66 aa)) is the AGC-kinase C-terminal domain. The interval 522-549 (FDELSDPNRKESSGGSDDDKKSGTCTLL) is disordered. Residues 527–543 (DPNRKESSGGSDDDKKS) are compositionally biased toward basic and acidic residues. Cysteine 546 is subject to Cysteine methyl ester. A lipid anchor (S-geranylgeranyl cysteine) is attached at cysteine 546. The propeptide at 547 to 549 (TLL) is removed in mature form.

It belongs to the protein kinase superfamily. AGC Ser/Thr protein kinase family. GPRK subfamily. In terms of processing, phosphorylation at Ser-33 is regulated by light and activated by cAMP.

The protein localises to the membrane. It catalyses the reaction L-threonyl-[rhodopsin] + ATP = O-phospho-L-threonyl-[rhodopsin] + ADP + H(+). The enzyme catalyses L-seryl-[rhodopsin] + ATP = O-phospho-L-seryl-[rhodopsin] + ADP + H(+). Retina-specific kinase involved in the shutoff of the photoresponse and adaptation to changing light conditions via cone opsin phosphorylation, including rhodopsin (RHO). This is Rhodopsin kinase grk7a (grk7a) from Danio rerio (Zebrafish).